The primary structure comprises 255 residues: Ribonuclease PH (255 aa).

Residues Arg-86 and 124-126 (GTR) contribute to the phosphate site.

Belongs to the RNase PH family. In terms of assembly, homohexameric ring arranged as a trimer of dimers.

It catalyses the reaction tRNA(n+1) + phosphate = tRNA(n) + a ribonucleoside 5'-diphosphate. In terms of biological role, phosphorolytic 3'-5' exoribonuclease that plays an important role in tRNA 3'-end maturation. Removes nucleotide residues following the 3'-CCA terminus of tRNAs; can also add nucleotides to the ends of RNA molecules by using nucleoside diphosphates as substrates, but this may not be physiologically important. Probably plays a role in initiation of 16S rRNA degradation (leading to ribosome degradation) during starvation. The polypeptide is Ribonuclease PH (Aquifex aeolicus (strain VF5)).